A 488-amino-acid chain; its full sequence is GTPase Der (488 aa).

Residues 3–166 form the EngA-type G 1 domain; the sequence is PVVALVGRPN…YALAPYAEAL (164 aa). GTP is bound by residues 9–16, 56–60, and 118–121; these read GRPNVGKS, DTGGI, and NKVD. The tract at residues 168–191 is disordered; that stretch reads LNRDGDEDEDEEEREYSEEEAEAE. The span at 172–189 shows a compositional bias: acidic residues; the sequence is GDEDEDEEEREYSEEEAE. The 174-residue stretch at 200–373 folds into the EngA-type G 2 domain; that stretch reads IKMAIIGKPN…SVQEAYDSAT (174 aa). Residues 206 to 213, 253 to 257, and 318 to 321 each bind GTP; these read GKPNVGKS, DTAGV, and NKWD. One can recognise a KH-like domain in the interval 374-458; sequence RRVSTSMLTR…PIQIRFQDSA (85 aa).

It belongs to the TRAFAC class TrmE-Era-EngA-EngB-Septin-like GTPase superfamily. EngA (Der) GTPase family. Associates with the 50S ribosomal subunit.

GTPase that plays an essential role in the late steps of ribosome biogenesis. In Shewanella sediminis (strain HAW-EB3), this protein is GTPase Der.